The following is an 85-amino-acid chain: Prosialokinin (85 aa).

A signal peptide spans 1–23 (MNMFITVQIVIVLVLAVLSEAAS). The propeptide occupies 24 to 74 (LPTATERKDAMDEGPNQSDEPEGSVADPSTKDDDYSDSLKQDEKYYKVRLL). Residues 26-61 (TATERKDAMDEGPNQSDEPEGSVADPSTKDDDYSDS) are disordered. Positions 52-61 (STKDDDYSDS) are enriched in basic and acidic residues. Methionine 84 is subject to Methionine amide.

Belongs to the tachykinin family. Expressed exclusively in the medial lobe of female salivary gland. Not detected in female carcass without head and salivary glands. Not detected in male tissues.

Its subcellular location is the secreted. In terms of biological role, vasodilatory peptide. Facilitates mosquito blood feeding on vertebrate host. Induces nitric oxide (NO) release in blood vessels through the activation of the nitric oxide synthase (NOS3). Enhances endothelial permeability and induces edema at the site of inoculation in the host. Induces host smooth muscle contraction. Down-regulates production of Th1 cytokines, such as IL2 and IFN-gamma (IFNG), in mouse splenocytes. Up-regulates production of Th2 cytokines, such as IL4 and IL10, in mouse splenocytes. Promotes recruitment of host leukocytes, especially neutrophils and CD8+ T cells, to the bite site. Modulates cytokine production by host macrophages. Modulates populations of monocytes/macrophages, plasmacytoid dendritic cells, B cells, CD4+ T cells, NK and NKT cells, shifting mammalian immunity towards Th2 responses. (Microbial infection) Promotes Semliki Forest virus infection in the host. Functionally, (Microbial infection) Does not affect Zika virus replication in the host. This chain is Prosialokinin, found in Aedes aegypti (Yellowfever mosquito).